The chain runs to 641 residues: Phosphomethylpyrimidine synthase (641 aa).

Polar residues predominate over residues 1-13 (MNIRSNPDTTRPA). The interval 1–21 (MNIRSNPDTTRPAVTTGGLPS) is disordered. Substrate-binding positions include N221, M250, Y279, H315, 335–337 (SRG), 376–379 (DGLR), and E415. H419 contributes to the Zn(2+) binding site. Residue Y442 coordinates substrate. H483 contacts Zn(2+). Residues C563, C566, and C571 each contribute to the [4Fe-4S] cluster site.

This sequence belongs to the ThiC family. As to quaternary structure, homodimer. Requires [4Fe-4S] cluster as cofactor.

It carries out the reaction 5-amino-1-(5-phospho-beta-D-ribosyl)imidazole + S-adenosyl-L-methionine = 4-amino-2-methyl-5-(phosphooxymethyl)pyrimidine + CO + 5'-deoxyadenosine + formate + L-methionine + 3 H(+). The protein operates within cofactor biosynthesis; thiamine diphosphate biosynthesis. Catalyzes the synthesis of the hydroxymethylpyrimidine phosphate (HMP-P) moiety of thiamine from aminoimidazole ribotide (AIR) in a radical S-adenosyl-L-methionine (SAM)-dependent reaction. This chain is Phosphomethylpyrimidine synthase, found in Rhodopseudomonas palustris (strain BisB5).